A 1003-amino-acid polypeptide reads, in one-letter code: PHD finger protein 12 (1003 aa).

Residues 29 to 59 (APPKTDEAEKRSRKPEKESRRSGRATNHDSC) are disordered. The segment covering 32 to 59 (KTDEAEKRSRKPEKESRRSGRATNHDSC) has biased composition (basic and acidic residues). The PHD-type 1 zinc finger occupies 56-105 (HDSCDSCKEGGDLLCCDHCPAAFHLQCCNPPLSEEMLPPGEWMCHRCTVR). 5 residues coordinate Zn(2+): Cys59, Ser61, Cys62, His79, and Cys82. Disordered stretches follow at residues 110–183 (EQKK…HNDV) and 234–255 (TTAL…KNVK). Ser131 and Ser134 each carry phosphoserine. Residues 138–161 (LLDRPASKTELKAIAHARILERRA) show a composition bias toward basic and acidic residues. The segment covering 165-178 (GTPTSNASTETPTS) has biased composition (polar residues). Positions 202 to 241 (VQPQLRRPFELLIAAAMERNPTQFQLPNELTCTTALPGSS) are SIN3 interacting domain 1. The segment at 271–321 (VKVCFTCNRSCRVAPLIQCDYCPLLFHMDCLEPPLTAMPLGRWMCPNHIEH) adopts a PHD-type 2; atypical zinc-finger fold. Residues Cys274, Cys277, Cys289, Cys292, His297, Cys300, Cys315, and His318 each contribute to the Zn(2+) site. The interval 328-364 (NLTLSNRCQVFDRFQDTISQHVVKVDFLNRIHKKHPP) is SIN3 interacting domain 2. Residue Lys467 forms a Glycyl lysine isopeptide (Lys-Gly) (interchain with G-Cter in SUMO2) linkage. Disordered regions lie at residues 531-583 (KAPC…GWPR) and 641-671 (HRKT…VLTP). Residue Ser555 is modified to Phosphoserine. A phosphothreonine mark is found at Thr557 and Thr570. Over residues 641 to 656 (HRKTVQSQIGPSSTES) the composition is skewed to polar residues. A Phosphothreonine modification is found at Thr670. One can recognise an FHA domain in the interval 814 to 868 (LYIGTGADMDVCLTNYGHCNYVSGKHACIFYDENTKHYELLNYSEHGTTVDNVLY). The segment at 894 to 922 (RRRHQKQDEEPSEEAAMMSSQAQGPQRRP) is disordered. A Glycyl lysine isopeptide (Lys-Gly) (interchain with G-Cter in SUMO2) cross-link involves residue Lys899. Residues 907 to 916 (EAAMMSSQAQ) are compositionally biased toward low complexity. Residues Lys972, Lys986, and Lys990 each participate in a glycyl lysine isopeptide (Lys-Gly) (interchain with G-Cter in SUMO2) cross-link.

As to quaternary structure, component of SIN3 complexes. Interacts with SIN3A in a complex composed of HDAC1, SAP30 and SIN3A. Component of the SIN3B complex, which includes SIN3B, HDAC2 or HDAC1, PHF12 and MORF4L1; interacts directly with all subunits. Interacts with TLE5. As to expression, expressed mainly in heart, brain, lung, liver and testis.

Its subcellular location is the nucleus. Transcriptional repressor acting as key scaffolding subunit of SIN3 complexes which contributes to complex assembly by contacting each core subunit domain, stabilizes the complex and constitutes the substrate receptor by recruiting the H3 histone tail. SIN3 complexes are composed of a SIN3 scaffold subunit, one catalytic core (HDAC1 or HDAC2) and 2 chromatin targeting modules. SIN3B complex represses transcription and counteracts the histone acetyltransferase activity of EP300 through the recognition H3K27ac marks by PHF12 and the activity of the histone deacetylase HDAC2. SIN3B complex is recruited downstream of the constitutively active genes transcriptional start sites through interaction with histones and mitigates histone acetylation and RNA polymerase II progression within transcribed regions contributing to the regulation of transcription. May also repress transcription in a SIN3A-independent manner through recruitment of functional TLE5 complexes to DNA. May also play a role in ribosomal biogenesis. The chain is PHD finger protein 12 from Mus musculus (Mouse).